Reading from the N-terminus, the 203-residue chain is Small ribosomal subunit protein uS4c (203 aa).

Residues 91–154 (MRLDNIIFRL…KYESIISKNI (64 aa)) form the S4 RNA-binding domain.

This sequence belongs to the universal ribosomal protein uS4 family. Part of the 30S ribosomal subunit. Contacts protein S5. The interaction surface between S4 and S5 is involved in control of translational fidelity.

It is found in the plastid. The protein resides in the chloroplast. In terms of biological role, one of the primary rRNA binding proteins, it binds directly to 16S rRNA where it nucleates assembly of the body of the 30S subunit. With S5 and S12 plays an important role in translational accuracy. The protein is Small ribosomal subunit protein uS4c (rps4) of Lopidium struthiopteris (Moss).